We begin with the raw amino-acid sequence, 134 residues long: Small ribosomal subunit protein uS11 (134 aa).

Belongs to the universal ribosomal protein uS11 family. In terms of assembly, part of the 30S ribosomal subunit. Interacts with proteins S7 and S18. Binds to IF-3.

In terms of biological role, located on the platform of the 30S subunit, it bridges several disparate RNA helices of the 16S rRNA. Forms part of the Shine-Dalgarno cleft in the 70S ribosome. This Acidovorax ebreus (strain TPSY) (Diaphorobacter sp. (strain TPSY)) protein is Small ribosomal subunit protein uS11.